We begin with the raw amino-acid sequence, 629 residues long: 1-deoxy-D-xylulose-5-phosphate synthase (629 aa).

Thiamine diphosphate contacts are provided by residues H78 and 119–121 (AHS). A Mg(2+)-binding site is contributed by D150. Residues 151–152 (GA), N179, Y286, and E368 each bind thiamine diphosphate. Residue N179 participates in Mg(2+) binding.

This sequence belongs to the transketolase family. DXPS subfamily. As to quaternary structure, homodimer. Mg(2+) is required as a cofactor. It depends on thiamine diphosphate as a cofactor.

The enzyme catalyses D-glyceraldehyde 3-phosphate + pyruvate + H(+) = 1-deoxy-D-xylulose 5-phosphate + CO2. Its pathway is metabolic intermediate biosynthesis; 1-deoxy-D-xylulose 5-phosphate biosynthesis; 1-deoxy-D-xylulose 5-phosphate from D-glyceraldehyde 3-phosphate and pyruvate: step 1/1. Its function is as follows. Catalyzes the acyloin condensation reaction between C atoms 2 and 3 of pyruvate and glyceraldehyde 3-phosphate to yield 1-deoxy-D-xylulose-5-phosphate (DXP). The polypeptide is 1-deoxy-D-xylulose-5-phosphate synthase (Acidovorax ebreus (strain TPSY) (Diaphorobacter sp. (strain TPSY))).